We begin with the raw amino-acid sequence, 76 residues long: Small ribosomal subunit protein bS18 (76 aa).

It belongs to the bacterial ribosomal protein bS18 family. As to quaternary structure, part of the 30S ribosomal subunit. Forms a tight heterodimer with protein bS6.

Its function is as follows. Binds as a heterodimer with protein bS6 to the central domain of the 16S rRNA, where it helps stabilize the platform of the 30S subunit. The sequence is that of Small ribosomal subunit protein bS18 from Aeromonas hydrophila subsp. hydrophila (strain ATCC 7966 / DSM 30187 / BCRC 13018 / CCUG 14551 / JCM 1027 / KCTC 2358 / NCIMB 9240 / NCTC 8049).